The sequence spans 650 residues: Phosphomethylpyrimidine synthase (650 aa).

Residues N241, M270, Y299, H335, 355 to 357 (SRG), 396 to 399 (DGLR), and E435 contribute to the substrate site. H439 lines the Zn(2+) pocket. Y462 provides a ligand contact to substrate. H503 contacts Zn(2+). [4Fe-4S] cluster contacts are provided by C583, C586, and C591.

The protein belongs to the ThiC family. In terms of assembly, homodimer. [4Fe-4S] cluster is required as a cofactor.

It carries out the reaction 5-amino-1-(5-phospho-beta-D-ribosyl)imidazole + S-adenosyl-L-methionine = 4-amino-2-methyl-5-(phosphooxymethyl)pyrimidine + CO + 5'-deoxyadenosine + formate + L-methionine + 3 H(+). It participates in cofactor biosynthesis; thiamine diphosphate biosynthesis. In terms of biological role, catalyzes the synthesis of the hydroxymethylpyrimidine phosphate (HMP-P) moiety of thiamine from aminoimidazole ribotide (AIR) in a radical S-adenosyl-L-methionine (SAM)-dependent reaction. The polypeptide is Phosphomethylpyrimidine synthase (Pseudoalteromonas translucida (strain TAC 125)).